A 232-amino-acid polypeptide reads, in one-letter code: Gene 65 protein (232 aa).

The chain is Gene 65 protein (65) from Mycobacterium phage D29 (Mycobacteriophage D29).